Consider the following 192-residue polypeptide: UPF0149 protein VP2588 (192 aa).

This sequence belongs to the UPF0149 family.

The sequence is that of UPF0149 protein VP2588 from Vibrio parahaemolyticus serotype O3:K6 (strain RIMD 2210633).